The primary structure comprises 212 residues: B3 domain-containing protein Os04g0386900 (212 aa).

A disordered region spans residues 1 to 78; the sequence is MRAATALPSI…PRPPEPEPEK (78 aa). Low complexity-rich tracts occupy residues 8 to 23 and 36 to 46; these read PSIP…ASDP and DAGAEDPAAVD. The segment at residues 93–191 is a DNA-binding region (TF-B3); it reads FTCIMCKSHV…EFRVQVLRAE (99 aa).

The protein localises to the nucleus. The sequence is that of B3 domain-containing protein Os04g0386900 from Oryza sativa subsp. japonica (Rice).